The following is a 317-amino-acid chain: Urease accessory protein 6 (317 aa).

It belongs to the UreF family. As to quaternary structure, URE4, URE6 and URE7 may form a complex that acts as a GTP-hydrolysis-dependent molecular chaperone, activating the urease apoprotein URE1.

In terms of biological role, urease accessory protein required for the maturation and activation of urease via the functional incorporation of the urease nickel metallocenter. Plays a role in host brain invasion. This chain is Urease accessory protein 6, found in Cryptococcus neoformans var. grubii serotype A (strain H99 / ATCC 208821 / CBS 10515 / FGSC 9487) (Filobasidiella neoformans var. grubii).